We begin with the raw amino-acid sequence, 977 residues long: Glutamate receptor 2 (977 aa).

Positions 1-19 are cleaved as a signal peptide; sequence MNKNLLVFGFLIFVKIGET. At 20–621 the chain is on the extracellular side; that stretch reads SKKFPLRAFV…FSFMEPLGMT (602 aa). N-linked (GlcNAc...) asparagine glycans are attached at residues Asn36, Asn227, Asn291, Asn427, Asn532, and Asn566. Residues 622–642 traverse the membrane as a helical segment; sequence IWIFTLSSYFGVSLTIFLVSW. Over 643–695 the chain is Cytoplasmic; it reads FSPYEKRIEFKRGEFTVTNEFTLYNSLWFTLAAFMQQGTDILPRAVSGRIASS. The chain crosses the membrane as a helical span at residues 696 to 716; sequence CWWFFTLIIVSSYTANLAAFL. Over 717-898 the chain is Extracellular; sequence TLERMTPPIE…GTSSSLNLSK (182 aa). Residues Asn783 and Asn895 are each glycosylated (N-linked (GlcNAc...) asparagine). A helical membrane pass occupies residues 899–919; the sequence is VAGIFYILLAGMVLSMCTALV. Topologically, residues 920 to 977 are cytoplasmic; sequence EFLFRKNKENREKERNRMRSSRPLKPGILASCERAKQKQLQNRRTKSEEVSTPRSTLF. The tract at residues 954–977 is disordered; sequence AKQKQLQNRRTKSEEVSTPRSTLF.

The protein belongs to the glutamate-gated ion channel (TC 1.A.10.1) family. As to expression, command interneurons of the locomotory control circuit (AIA, AIB, AVA, AVD, AVE, PVC, RIA, RIG and RIR) and motor neurons (AVG, M1, RMDD and RMDV).

The protein resides in the membrane. It localises to the postsynaptic cell membrane. Its function is as follows. L-glutamate acts as an excitatory neurotransmitter at many synapses in the central nervous system. The postsynaptic actions of glutamate are mediated by a variety of receptors that are named according to their selective agonists. Required for response to mechanical and osmotic stimuli. The sequence is that of Glutamate receptor 2 (glr-2) from Caenorhabditis elegans.